The primary structure comprises 61 residues: Small ribosomal subunit protein uS14B (61 aa).

Cys-24, Cys-27, Cys-40, and Cys-43 together coordinate Zn(2+).

The protein belongs to the universal ribosomal protein uS14 family. Zinc-binding uS14 subfamily. As to quaternary structure, part of the 30S ribosomal subunit. Contacts proteins S3 and S10. Requires Zn(2+) as cofactor.

Binds 16S rRNA, required for the assembly of 30S particles and may also be responsible for determining the conformation of the 16S rRNA at the A site. The sequence is that of Small ribosomal subunit protein uS14B from Staphylococcus saprophyticus subsp. saprophyticus (strain ATCC 15305 / DSM 20229 / NCIMB 8711 / NCTC 7292 / S-41).